Consider the following 385-residue polypeptide: Isocitrate dehydrogenase [NAD] subunit beta, mitochondrial (385 aa).

A mitochondrion-targeting transit peptide spans M1–Q33. An N6-acetyllysine modification is found at K199.

The protein belongs to the isocitrate and isopropylmalate dehydrogenases family. As to quaternary structure, heterooligomer of subunits alpha (IDH3A), beta (IDH3B), and gamma (IDH3G) in the apparent ratio of 2:1:1. The heterodimer containing one IDH3A and one IDH3B subunit and the heterodimer containing one IDH3A and one IDH3G subunit assemble into a heterotetramer (which contains two subunits of IDH3A, one of IDH3B and one of IDH3G) and further into the heterooctamer. In terms of tissue distribution, isoform A is predominant in heart muscle; also found in brain, kidney and liver. Isoform B is present in kidney and liver.

The protein localises to the mitochondrion. The heterotetramer and the heterodimer composed of IDH3A and IDH3G subunits can be allosterically activated by citrate (CIT) or/and ADP, and the two activators can act independently or synergistically. The heterodimer composed of IDH3A and IDH3B subunits cannot be allosterically regulated and the allosteric regulation of the heterotetramer is through the IDH3G subunit and not the IDH3B subunit. The IDH3G subunit contains the allosteric site which consists of a CIT-binding site and an ADP-binding site, and the binding of CIT and ADP causes conformational changes at the allosteric site which are transmitted to the active site in the catalytic subunit (IDH3A) through a cascade of conformational changes at the heterodimer interface, leading to stabilization of the isocitrate-binding at the active site and thus activation of the enzyme. ATP can activate the heterotetramer and the heterodimer composed of IDH3A and IDH3G subunits at low concentrations but inhibits their activities at high concentrations, whereas ATP exhibits only inhibitory effect on the heterodimer composed of IDH3A and IDH3B subunits. In terms of biological role, plays a structural role to facilitate the assembly and ensure the full activity of the enzyme catalyzing the decarboxylation of isocitrate (ICT) into alpha-ketoglutarate. The heterodimer composed of the alpha (IDH3A) and beta (IDH3B) subunits and the heterodimer composed of the alpha (IDH3A) and gamma (IDH3G) subunits, have considerable basal activity but the full activity of the heterotetramer (containing two subunits of IDH3A, one of IDH3B and one of IDH3G) requires the assembly and cooperative function of both heterodimers. The polypeptide is Isocitrate dehydrogenase [NAD] subunit beta, mitochondrial (IDH3B) (Bos taurus (Bovine)).